The primary structure comprises 202 residues: Interleukin-17D (202 aa).

Residues M1–A15 form the signal peptide. The segment at Q65–P85 is disordered. Residues N68 and N181 are each glycosylated (N-linked (GlcNAc...) asparagine).

Belongs to the IL-17 family. In terms of tissue distribution, expressed preferentially in adipose, skeletal muscle and CNS.

The protein resides in the secreted. Its function is as follows. Induces expression of IL6, CXCL8/IL8, and CSF2/GM-CSF from endothelial cells. This Homo sapiens (Human) protein is Interleukin-17D (IL17D).